The sequence spans 322 residues: Cytochrome c biogenesis protein CcsA (322 aa).

Transmembrane regions (helical) follow at residues 9–29 (ILTH…LITL), 44–64 (GMIV…VSSG), 68–88 (LSNL…LHTI), 143–163 (MLLS…ILII), 226–246 (IISL…VWAN), 260–274 (TWAF…IYLH), and 289–309 (IASI…LLGI).

Belongs to the CcmF/CycK/Ccl1/NrfE/CcsA family. As to quaternary structure, may interact with Ccs1.

The protein resides in the plastid. Its subcellular location is the chloroplast thylakoid membrane. Required during biogenesis of c-type cytochromes (cytochrome c6 and cytochrome f) at the step of heme attachment. This is Cytochrome c biogenesis protein CcsA from Hordeum vulgare (Barley).